We begin with the raw amino-acid sequence, 209 residues long: Kynurenine formamidase (209 aa).

Residue Phe18 coordinates substrate. Zn(2+)-binding residues include His48, His52, and Asp54. The active-site Proton donor/acceptor is His58. Positions 160 and 172 each coordinate Zn(2+).

This sequence belongs to the Cyclase 1 superfamily. KynB family. In terms of assembly, homodimer. Zn(2+) is required as a cofactor.

It catalyses the reaction N-formyl-L-kynurenine + H2O = L-kynurenine + formate + H(+). The protein operates within amino-acid degradation; L-tryptophan degradation via kynurenine pathway; L-kynurenine from L-tryptophan: step 2/2. Its function is as follows. Catalyzes the hydrolysis of N-formyl-L-kynurenine to L-kynurenine, the second step in the kynurenine pathway of tryptophan degradation. This is Kynurenine formamidase from Bordetella avium (strain 197N).